A 404-amino-acid chain; its full sequence is Glucose-1-phosphate adenylyltransferase (404 aa).

Residues tyrosine 99, glycine 164, 179 to 180, and serine 197 each bind alpha-D-glucose 1-phosphate; that span reads EK.

It belongs to the bacterial/plant glucose-1-phosphate adenylyltransferase family. Homotetramer.

The catalysed reaction is alpha-D-glucose 1-phosphate + ATP + H(+) = ADP-alpha-D-glucose + diphosphate. It participates in glycan biosynthesis; glycogen biosynthesis. In terms of biological role, involved in the biosynthesis of ADP-glucose, a building block required for the elongation reactions to produce glycogen. Catalyzes the reaction between ATP and alpha-D-glucose 1-phosphate (G1P) to produce pyrophosphate and ADP-Glc. The protein is Glucose-1-phosphate adenylyltransferase of Rhodococcus erythropolis (strain PR4 / NBRC 100887).